The sequence spans 397 residues: Lysophospholipid transporter LplT (397 aa).

The Periplasmic segment spans residues 1-17; that stretch reads MSESVHTNTSLWSKGMK. A helical transmembrane segment spans residues 18–38; it reads AVIVAQFLSAFGDNALLFATL. Residues 39–52 lie on the Cytoplasmic side of the membrane; it reads ALLKAQFYPEWSQP. Residues 53–73 traverse the membrane as a helical segment; sequence ILQMVFVGAYILFAPFVGQVA. At 74-90 the chain is on the periplasmic side; sequence DSFAKGRVMMFANGLKL. Residues 91 to 111 form a helical membrane-spanning segment; that stretch reads LGAASICFGINPFLGYTLVGV. Over 112–144 the chain is Cytoplasmic; the sequence is GAAAYSPAKYGILGELTTGSKLVKANGLMEAST. Residues 145 to 165 traverse the membrane as a helical segment; it reads IAAILLGSVAGGVLADWHVLV. Position 166 (A166) is a topological domain, periplasmic. A helical membrane pass occupies residues 167-187; that stretch reads LAACALAYGGAVVANIYIPKL. Residues 188-226 lie on the Cytoplasmic side of the membrane; that stretch reads AAARPGQSWNLISMTRSFLNACTSLWRNGETRFSLVGTS. The chain crosses the membrane as a helical span at residues 227–247; it reads LFWGAGVTLRFLLVLWVPVAL. Over 248–256 the chain is Periplasmic; that stretch reads GITDNATPT. The helical transmembrane segment at 257–277 threads the bilayer; it reads YLNAMVAIGIVVGAGAAAKLV. Over 278 to 280 the chain is Cytoplasmic; that stretch reads TLE. Residues 281-301 traverse the membrane as a helical segment; it reads TVSRCMPAGILIGVVVLIFSL. Residues 302–304 lie on the Periplasmic side of the membrane; it reads QHE. The helical transmembrane segment at 305–325 threads the bilayer; the sequence is LLPAYALLMLIGVLGGFFVVP. At 326–343 the chain is on the cytoplasmic side; that stretch reads LNALLQERGKKSVGAGNA. Residues 344-364 form a helical membrane-spanning segment; that stretch reads IAVQNLGENSAMLLMLGIYSL. Over 365 to 366 the chain is Periplasmic; the sequence is AV. Residues 367-387 traverse the membrane as a helical segment; it reads MVGIPVVPIGIGFGALFALAI. At 388-397 the chain is on the cytoplasmic side; sequence TALWIWQRRH.

This sequence belongs to the major facilitator superfamily. LplT (TC 2.A.1.42) family.

The protein resides in the cell inner membrane. Its function is as follows. Catalyzes the facilitated diffusion of 2-acyl-glycero-3-phosphoethanolamine (2-acyl-GPE) into the cell. The sequence is that of Lysophospholipid transporter LplT from Escherichia coli O7:K1 (strain IAI39 / ExPEC).